The primary structure comprises 129 residues: Small ribosomal subunit protein uS11 (129 aa).

The protein belongs to the universal ribosomal protein uS11 family. In terms of assembly, part of the 30S ribosomal subunit. Interacts with proteins S7 and S18. Binds to IF-3.

Located on the platform of the 30S subunit, it bridges several disparate RNA helices of the 16S rRNA. Forms part of the Shine-Dalgarno cleft in the 70S ribosome. This chain is Small ribosomal subunit protein uS11, found in Baumannia cicadellinicola subsp. Homalodisca coagulata.